Reading from the N-terminus, the 282-residue chain is uncharacterized protein (282 aa).

The HTH rpiR-type domain occupies Met1 to Gln77. A DNA-binding region (H-T-H motif) is located at residues Ser37–Gln56. The 141-residue stretch at Cys125 to Glu265 folds into the SIS domain.

This is an uncharacterized protein from Escherichia coli (strain K12).